The following is a 131-amino-acid chain: Cilia- and flagella-associated protein 144 (131 aa).

Residues 79 to 99 (TKKYSEPQTESQEIGWNTTPL) are disordered. Polar residues predominate over residues 84–99 (EPQTESQEIGWNTTPL).

Belongs to the CFAP144 family. As to expression, expressed in choroid plexus (at protein level). Expressed by motile ciliated cells in choroid plexus.

The protein resides in the cytoplasm. It is found in the cytoskeleton. The protein localises to the cilium axoneme. Its subcellular location is the flagellum axoneme. Its function is as follows. Microtubule inner protein (MIP) part of the dynein-decorated doublet microtubules (DMTs) in cilia axoneme, which is required for motile cilia beating. This chain is Cilia- and flagella-associated protein 144 (CFAP144), found in Gallus gallus (Chicken).